We begin with the raw amino-acid sequence, 378 residues long: MSHLDNGFRSLTLQRFPATDDVNPLQAWEAADEYLLQQLDDTEIRGPVLILNDAFGALSCALAEHKPYSIGDSYISELATRENLRLNGIDESSVKFLDSTADYPQQPGVVLIKVPKTLALLEQQLRALRKVVTSDTRIIAGAKARDIHTSTLELFEKVLGPTTTTLAWKKARLINCTFNEPPLADAPQTVSWKLEGTDWTIHNHANVFSRTGLDIGARFFMQHLPENLEGEIVDLGCGNGVIGLTLLDKNPQAKVVFVDESPMAVASSRLNVETNMPEALDRSEFMINNALSGVEPFRFNAVLCNPPFHQQHALTDNVAWEMFHHARRCLKINSELYIVANRHLDYFHKLKKIFGNCTTIATNNKFVVLKAVKLGRRR.

The protein belongs to the methyltransferase superfamily. RlmG family.

The protein resides in the cytoplasm. It carries out the reaction guanosine(1835) in 23S rRNA + S-adenosyl-L-methionine = N(2)-methylguanosine(1835) in 23S rRNA + S-adenosyl-L-homocysteine + H(+). In terms of biological role, specifically methylates the guanine in position 1835 (m2G1835) of 23S rRNA. The protein is Ribosomal RNA large subunit methyltransferase G of Shigella boydii serotype 18 (strain CDC 3083-94 / BS512).